The primary structure comprises 410 residues: Lissencephaly-1 homolog B (410 aa).

Positions 7-39 (QRDELNRAIADYLRSNGYEEAYSTFKKEAELDM) constitute a LisH domain. Residues 56-82 (TSVIRLQKKVMELESKLNEAKEEITLG) adopt a coiled-coil conformation. WD repeat units follow at residues 106–147 (GHRS…RTLK), 148–187 (GHTD…CIRT), 190–229 (GHDH…CVKT), 232–271 (GHRE…CKAE), 274–333 (EHEH…CLMT), 336–375 (GHDN…CMKT), and 378–410 (AHEH…WECR).

This sequence belongs to the WD repeat LIS1/nudF family. As to quaternary structure, can self-associate. Component of the cytosolic PAF-AH (I) heterotetrameric enzyme, which is composed of PAFAH1B1 (beta), PAFAH1B2 (alpha2) and PAFAH1B3 (alpha1) subunits. The catalytic activity of the enzyme resides in the alpha1 (PAFAH1B3) and alpha2 (PAFAH1B2) subunits, whereas the beta subunit (PAFAH1B1) has regulatory activity. Trimer formation is not essential for the catalytic activity. Interacts with dynein, dynactin, nde1 and ndel1.

The protein localises to the cytoplasm. It localises to the cytoskeleton. The protein resides in the microtubule organizing center. Its subcellular location is the centrosome. Its function is as follows. Regulatory subunit (beta subunit) of the cytosolic type I platelet-activating factor (PAF) acetylhydrolase (PAF-AH (I)), an enzyme that catalyzes the hydrolyze of the acetyl group at the sn-2 position of PAF and its analogs and participates in PAF inactivation. Regulates the PAF-AH (I) activity in a catalytic dimer composition-dependent manner. Positively regulates the activity of the minus-end directed microtubule motor protein dynein. May enhance dynein-mediated microtubule sliding by targeting dynein to the microtubule plus end. Required for several dynein- and microtubule-dependent processes such as the maintenance of Golgi integrity, the peripheral transport of microtubule fragments and the coupling of the nucleus and centrosome. May be required for proliferation of neuronal precursors and neuronal migration. The protein is Lissencephaly-1 homolog B (pafah1b1-2) of Salmo salar (Atlantic salmon).